A 332-amino-acid polypeptide reads, in one-letter code: Fructose-1,6-bisphosphatase class 1 (332 aa).

Mg(2+) is bound by residues Glu89, Asp110, Leu112, and Asp113. Substrate is bound by residues 113–116, Asn206, Tyr239, 257–259, and Lys269; these read DGSS and YLY. Glu275 lines the Mg(2+) pocket.

Belongs to the FBPase class 1 family. Homotetramer. Mg(2+) serves as cofactor.

The protein localises to the cytoplasm. It carries out the reaction beta-D-fructose 1,6-bisphosphate + H2O = beta-D-fructose 6-phosphate + phosphate. The protein operates within carbohydrate biosynthesis; gluconeogenesis. This is Fructose-1,6-bisphosphatase class 1 from Salmonella gallinarum (strain 287/91 / NCTC 13346).